The primary structure comprises 327 residues: MERRNHSGRVSEFVLLGFPAPAPLRVLLFFLSLLAYVLVLTENMLIIIAIRNHPTLHKPMYFFLANMSFLEIWYVTVTIPKMLAGFIGSKENHGQLISFEACMTQLYFFLGLGCTECVLLAVMAYDRYVAICHPLHYPVIVSSRLCVQMAAGSWAGGFGISMVKVFLISRLSYCGPNTINHFFCDVSPLLNLSCTDMSTAELTDFVLAIFILLGPLSVTGASYMAITGAVMRIPSAAGRHKAFSTCASHLTVVIIFYAASIFIYARPKALSAFDTNKLVSVLYAVIVPLFNPIIYCLRNQDVKRALRRTLHLAQDQEANTNKGSKNG.

The Extracellular segment spans residues 1–26; that stretch reads MERRNHSGRVSEFVLLGFPAPAPLRV. Asparagine 5 carries an N-linked (GlcNAc...) asparagine glycan. Residues 27–50 form a helical membrane-spanning segment; sequence LLFFLSLLAYVLVLTENMLIIIAI. Residues 51–58 lie on the Cytoplasmic side of the membrane; it reads RNHPTLHK. The chain crosses the membrane as a helical span at residues 59–80; that stretch reads PMYFFLANMSFLEIWYVTVTIP. Residues 81–104 are Extracellular-facing; it reads KMLAGFIGSKENHGQLISFEACMT. A disulfide bond links cysteine 102 and cysteine 194. The chain crosses the membrane as a helical span at residues 105-125; it reads QLYFFLGLGCTECVLLAVMAY. The Cytoplasmic portion of the chain corresponds to 126–144; that stretch reads DRYVAICHPLHYPVIVSSR. A helical transmembrane segment spans residues 145 to 163; sequence LCVQMAAGSWAGGFGISMV. Topologically, residues 164-201 are extracellular; that stretch reads KVFLISRLSYCGPNTINHFFCDVSPLLNLSCTDMSTAE. Residues 202 to 224 traverse the membrane as a helical segment; sequence LTDFVLAIFILLGPLSVTGASYM. The Cytoplasmic segment spans residues 225-241; it reads AITGAVMRIPSAAGRHK. The chain crosses the membrane as a helical span at residues 242-265; that stretch reads AFSTCASHLTVVIIFYAASIFIYA. Residues 266–277 lie on the Extracellular side of the membrane; sequence RPKALSAFDTNK. Residues 278–297 traverse the membrane as a helical segment; sequence LVSVLYAVIVPLFNPIIYCL. Over 298–327 the chain is Cytoplasmic; the sequence is RNQDVKRALRRTLHLAQDQEANTNKGSKNG.

The protein belongs to the G-protein coupled receptor 1 family. Olfactory epithelium.

Its subcellular location is the cell membrane. Functionally, odorant receptor. This chain is Olfactory receptor 226 (Olr226), found in Rattus norvegicus (Rat).